A 402-amino-acid chain; its full sequence is S-adenosylmethionine synthase (402 aa).

Histidine 16 is an ATP binding site. Position 18 (aspartate 18) interacts with Mg(2+). Position 44 (glutamate 44) interacts with K(+). The L-methionine site is built by glutamate 57 and glutamine 103. The segment at 103–113 (QSPDIAQGVDT) is flexible loop. ATP is bound by residues 178–180 (DGK), 249–250 (KF), aspartate 258, 264–265 (RK), alanine 281, and lysine 285. Aspartate 258 provides a ligand contact to L-methionine. Lysine 289 is a binding site for L-methionine.

This sequence belongs to the AdoMet synthase family. Homotetramer; dimer of dimers. The cofactor is Mg(2+). It depends on K(+) as a cofactor.

It is found in the cytoplasm. The catalysed reaction is L-methionine + ATP + H2O = S-adenosyl-L-methionine + phosphate + diphosphate. The protein operates within amino-acid biosynthesis; S-adenosyl-L-methionine biosynthesis; S-adenosyl-L-methionine from L-methionine: step 1/1. Its function is as follows. Catalyzes the formation of S-adenosylmethionine (AdoMet) from methionine and ATP. The overall synthetic reaction is composed of two sequential steps, AdoMet formation and the subsequent tripolyphosphate hydrolysis which occurs prior to release of AdoMet from the enzyme. This Mycolicibacterium gilvum (strain PYR-GCK) (Mycobacterium gilvum (strain PYR-GCK)) protein is S-adenosylmethionine synthase.